A 259-amino-acid chain; its full sequence is Ditrans,polycis-undecaprenyl-diphosphate synthase ((2E,6E)-farnesyl-diphosphate specific) (259 aa).

The active site involves Asp-32. Asp-32 is a Mg(2+) binding site. Substrate is bound by residues 33-36 (GNGR), Trp-37, Arg-45, His-49, and 77-79 (STE). Asn-80 acts as the Proton acceptor in catalysis. Substrate is bound by residues Trp-81, Arg-83, Arg-203, and 209–211 (RIS). Glu-222 is a Mg(2+) binding site.

Belongs to the UPP synthase family. As to quaternary structure, homodimer. It depends on Mg(2+) as a cofactor.

The enzyme catalyses 8 isopentenyl diphosphate + (2E,6E)-farnesyl diphosphate = di-trans,octa-cis-undecaprenyl diphosphate + 8 diphosphate. Functionally, catalyzes the sequential condensation of isopentenyl diphosphate (IPP) with (2E,6E)-farnesyl diphosphate (E,E-FPP) to yield (2Z,6Z,10Z,14Z,18Z,22Z,26Z,30Z,34E,38E)-undecaprenyl diphosphate (di-trans,octa-cis-UPP). UPP is the precursor of glycosyl carrier lipid in the biosynthesis of bacterial cell wall polysaccharide components such as peptidoglycan and lipopolysaccharide. The sequence is that of Ditrans,polycis-undecaprenyl-diphosphate synthase ((2E,6E)-farnesyl-diphosphate specific) (uppS) from Lactiplantibacillus plantarum (strain ATCC BAA-793 / NCIMB 8826 / WCFS1) (Lactobacillus plantarum).